The chain runs to 359 residues: Phosphate acyltransferase (359 aa).

A disordered region spans residues 337–359 (AAGAAQPAPETEVPGAHPSPHVA).

The protein belongs to the PlsX family. Homodimer. Probably interacts with PlsY.

Its subcellular location is the cytoplasm. The enzyme catalyses a fatty acyl-[ACP] + phosphate = an acyl phosphate + holo-[ACP]. Its pathway is lipid metabolism; phospholipid metabolism. Its function is as follows. Catalyzes the reversible formation of acyl-phosphate (acyl-PO(4)) from acyl-[acyl-carrier-protein] (acyl-ACP). This enzyme utilizes acyl-ACP as fatty acyl donor, but not acyl-CoA. The sequence is that of Phosphate acyltransferase from Cupriavidus necator (strain ATCC 17699 / DSM 428 / KCTC 22496 / NCIMB 10442 / H16 / Stanier 337) (Ralstonia eutropha).